Reading from the N-terminus, the 82-residue chain is Metallothionein-like protein 2A (82 aa).

It belongs to the metallothionein superfamily. Type 15 family. In terms of tissue distribution, expressed in stems, leaves, rachis, inflorescences and seeds.

Metallothioneins have a high content of cysteine residues that bind various heavy metals. The sequence is that of Metallothionein-like protein 2A (MT2A) from Oryza sativa subsp. japonica (Rice).